The primary structure comprises 180 residues: Bifunctional protein PyrR (180 aa).

The PRPP-binding signature appears at 99–111 (VILVDDVLYTCRT).

The protein belongs to the purine/pyrimidine phosphoribosyltransferase family. PyrR subfamily. Homodimer and homohexamer; in equilibrium.

The catalysed reaction is UMP + diphosphate = 5-phospho-alpha-D-ribose 1-diphosphate + uracil. Its function is as follows. Regulates transcriptional attenuation of the pyrimidine nucleotide (pyr) operon by binding in a uridine-dependent manner to specific sites on pyr mRNA. This disrupts an antiterminator hairpin in the RNA and favors formation of a downstream transcription terminator, leading to a reduced expression of downstream genes. In terms of biological role, also displays a weak uracil phosphoribosyltransferase activity which is not physiologically significant. The protein is Bifunctional protein PyrR of Clostridium botulinum (strain Alaska E43 / Type E3).